A 250-amino-acid chain; its full sequence is Developmental protein SEPALLATA 2 (250 aa).

An MADS-box domain is found at 3–57; it reads RGRVELKRIENKINRQVTFAKRRNGLLKKAYELSVLCDAEVSLIVFSNRGKLYEF. A coiled-coil region spans residues 85–150; the sequence is AKELENSYRE…CIKTQYMLDQ (66 aa). The region spanning 88-178 is the K-box domain; sequence LENSYREYLK…SMKLEDMIGV (91 aa).

As to quaternary structure, heterodimer with AGAMOUS capable of binding to CArG-box sequences. Interacts with TT16/AGL32.

It localises to the nucleus. Probable transcription factor. Functions with SEPALLATA1/AGL2 and SEPALLATA3/AGL9 to ensure proper development of petals, stamens and carpels and to prevent the indeterminate growth of the flower meristem. Forms a heterodimer via the K-box domain with AG, that could be involved in genes regulation during floral meristem development. In Arabidopsis thaliana (Mouse-ear cress), this protein is Developmental protein SEPALLATA 2 (SEP2).